The primary structure comprises 394 residues: Chaperone protein DnaJ (394 aa).

A J domain is found at 4–68 (DYYEILGVSR…ELKARYDRFG (65 aa)). The CR-type zinc-finger motif lies at 136 to 218 (GGEKQIRISH…CNGEGLAQTT (83 aa)). Residues cysteine 149, cysteine 152, cysteine 166, cysteine 169, cysteine 192, cysteine 195, cysteine 206, and cysteine 209 each coordinate Zn(2+). CXXCXGXG motif repeat units follow at residues 149 to 156 (CNVCGGSG), 166 to 173 (CPTCGGSG), 192 to 199 (CPTCGGSG), and 206 to 213 (CYNCNGEG).

This sequence belongs to the DnaJ family. In terms of assembly, homodimer. Requires Zn(2+) as cofactor.

It is found in the cytoplasm. In terms of biological role, participates actively in the response to hyperosmotic and heat shock by preventing the aggregation of stress-denatured proteins and by disaggregating proteins, also in an autonomous, DnaK-independent fashion. Unfolded proteins bind initially to DnaJ; upon interaction with the DnaJ-bound protein, DnaK hydrolyzes its bound ATP, resulting in the formation of a stable complex. GrpE releases ADP from DnaK; ATP binding to DnaK triggers the release of the substrate protein, thus completing the reaction cycle. Several rounds of ATP-dependent interactions between DnaJ, DnaK and GrpE are required for fully efficient folding. Also involved, together with DnaK and GrpE, in the DNA replication of plasmids through activation of initiation proteins. The chain is Chaperone protein DnaJ from Synechococcus sp. (strain JA-2-3B'a(2-13)) (Cyanobacteria bacterium Yellowstone B-Prime).